A 68-amino-acid polypeptide reads, in one-letter code: uncharacterized protein (68 aa).

Positions 1–28 (MNKEQSADDPSVDLIRVKNMLNSTISMS) are cleaved as a signal peptide.

This is an uncharacterized protein from Escherichia coli (strain K12).